The sequence spans 401 residues: 3-oxoadipyl-CoA/3-oxo-5,6-dehydrosuberyl-CoA thiolase (401 aa).

Residue Cys-90 is the Acyl-thioester intermediate of the active site. Residues His-357 and Cys-387 each act as proton acceptor in the active site.

It belongs to the thiolase-like superfamily. Thiolase family.

The enzyme catalyses succinyl-CoA + acetyl-CoA = 3-oxoadipyl-CoA + CoA. It catalyses the reaction 2,3-didehydroadipoyl-CoA + acetyl-CoA = 3-oxo-5,6-didehydrosuberyl-CoA + CoA. The protein operates within aromatic compound metabolism; phenylacetate degradation. Its function is as follows. Catalyzes the thiolytic cleavage of the beta-keto C8 intermediate 3-oxo-5,6-dehydrosuberyl-CoA with CoA to yield the C6 intermediate 2,3-dehydroadipyl-CoA and acetyl-CoA. Besides it catalyzes also the last step of the pathway, in which 3-oxoadipyl-CoA similarly is cleaved to acetyl-CoA and succinyl-CoA. The polypeptide is 3-oxoadipyl-CoA/3-oxo-5,6-dehydrosuberyl-CoA thiolase (paaJ) (Escherichia coli (strain K12)).